The following is a 152-amino-acid chain: Succinate dehydrogenase [ubiquinone] cytochrome b small subunit A, mitochondrial (152 aa).

A mitochondrion-targeting transit peptide spans 1–21; sequence MVTVLRLSSLCRANRASAFKS. The Mitochondrial matrix portion of the chain corresponds to 22–56; it reads LLIRPVPCLSQDLHTVQTSQIHTSQNHHAASKAAS. The chain crosses the membrane as a helical span at residues 57-78; that stretch reads LHWTSERALSVALLGLLPAAYL. At 79–83 the chain is on the mitochondrial intermembrane side; it reads YPGAA. Residues 84 to 104 traverse the membrane as a helical segment; it reads VDYSLAAALTLHGHWGLGQVV. H95 contributes to the heme b binding site. Residues 105-113 lie on the Mitochondrial matrix side of the membrane; the sequence is TDYVHGDAK. A ubiquinone is bound at residue Y107. The helical transmembrane segment at 114–135 threads the bilayer; that stretch reads IKLANTSLFALSALTFAGLCYF. Topologically, residues 136–152 are mitochondrial intermembrane; sequence NYHDVGICKAVAMLWSL.

Belongs to the CybS family. As to quaternary structure, component of complex II composed of four subunits: the flavoprotein (FP) SDHA, iron-sulfur protein (IP) SDHB, and a cytochrome b560 composed of SDHC and SDHD.

It is found in the mitochondrion inner membrane. It participates in carbohydrate metabolism; tricarboxylic acid cycle. Functionally, membrane-anchoring subunit of succinate dehydrogenase (SDH) that is involved in complex II of the mitochondrial electron transport chain and is responsible for transferring electrons from succinate to ubiquinone (coenzyme Q). SDH also oxidizes malate to the non-canonical enol form of oxaloacetate, enol-oxaloacetate. Enol-oxaloacetate, which is a potent inhibitor of the succinate dehydrogenase activity, is further isomerized into keto-oxaloacetate. The protein is Succinate dehydrogenase [ubiquinone] cytochrome b small subunit A, mitochondrial (sdhd-a) of Xenopus laevis (African clawed frog).